The sequence spans 225 residues: Probable molybdenum cofactor guanylyltransferase (225 aa).

GTP is bound by residues leucine 20 to glycine 22, lysine 33, aspartate 88, and aspartate 117. Position 117 (aspartate 117) interacts with Mg(2+).

It belongs to the MobA family. The cofactor is Mg(2+).

Its subcellular location is the cytoplasm. It catalyses the reaction Mo-molybdopterin + GTP + H(+) = Mo-molybdopterin guanine dinucleotide + diphosphate. In terms of biological role, transfers a GMP moiety from GTP to Mo-molybdopterin (Mo-MPT) cofactor (Moco or molybdenum cofactor) to form Mo-molybdopterin guanine dinucleotide (Mo-MGD) cofactor. The chain is Probable molybdenum cofactor guanylyltransferase from Methanosarcina acetivorans (strain ATCC 35395 / DSM 2834 / JCM 12185 / C2A).